The following is a 175-amino-acid chain: Shikimate kinase (175 aa).

G14–T19 serves as a coordination point for ATP. S18 serves as a coordination point for Mg(2+). Substrate is bound by residues D36, R60, and G82. Position 120 (R120) interacts with ATP. Position 140 (R140) interacts with substrate. Residue Q157 participates in ATP binding.

The protein belongs to the shikimate kinase family. As to quaternary structure, monomer. Requires Mg(2+) as cofactor.

It localises to the cytoplasm. The enzyme catalyses shikimate + ATP = 3-phosphoshikimate + ADP + H(+). The protein operates within metabolic intermediate biosynthesis; chorismate biosynthesis; chorismate from D-erythrose 4-phosphate and phosphoenolpyruvate: step 5/7. Functionally, catalyzes the specific phosphorylation of the 3-hydroxyl group of shikimic acid using ATP as a cosubstrate. This is Shikimate kinase from Mannheimia succiniciproducens (strain KCTC 0769BP / MBEL55E).